We begin with the raw amino-acid sequence, 300 residues long: Ribosomal RNA small subunit methyltransferase H (300 aa).

S-adenosyl-L-methionine is bound by residues glycine 35–histidine 37, aspartate 55, phenylalanine 82, aspartate 100, and glutamine 107.

This sequence belongs to the methyltransferase superfamily. RsmH family.

It localises to the cytoplasm. It catalyses the reaction cytidine(1402) in 16S rRNA + S-adenosyl-L-methionine = N(4)-methylcytidine(1402) in 16S rRNA + S-adenosyl-L-homocysteine + H(+). In terms of biological role, specifically methylates the N4 position of cytidine in position 1402 (C1402) of 16S rRNA. The protein is Ribosomal RNA small subunit methyltransferase H of Chlamydia trachomatis serovar A (strain ATCC VR-571B / DSM 19440 / HAR-13).